The sequence spans 603 residues: Geraniol synthase Tps-5031G8, chloroplastic (603 aa).

Residues 1–35 constitute a chloroplast transit peptide; sequence MCSISQKVVIGLNKAAANNCLQNLDRRGFKTRRVS. The (2E)-geranyl diphosphate site is built by Arg319, Asp356, Asp360, Arg497, and Asp500. Mg(2+)-binding residues include Asp356 and Asp360. The short motif at 356–360 is the DDXXD motif element; the sequence is DDVYD. 3 residues coordinate Mg(2+): Asp500, Thr504, and Glu508.

Belongs to the terpene synthase family. Tpsb subfamily. In terms of assembly, monomer. It depends on Mg(2+) as a cofactor. Requires Mn(2+) as cofactor.

It is found in the plastid. Its subcellular location is the chloroplast. It carries out the reaction (2E)-geranyl diphosphate + H2O = (2E)-geraniol + diphosphate. It functions in the pathway secondary metabolite biosynthesis; terpenoid biosynthesis. In terms of biological role, monoterpene synthase (mono-TPS) involved in the biosynthesis of monoterpenes natural products. Catalyzes the conversion of (2E)-geranyl diphosphate (GPP) into geraniol. The protein is Geraniol synthase Tps-5031G8, chloroplastic of Perilla frutescens var. hirtella (Perilla citriodora).